Consider the following 955-residue polypeptide: Calsyntenin-2 (955 aa).

An N-terminal signal peptide occupies residues 1–20 (MLPGRLCWVPLLLALGVGSG). At 21-831 (SGGGGDSRQR…SIQHSSVVPS (811 aa)) the chain is on the extracellular side. Cadherin domains follow at residues 44 to 160 (IETS…APTF) and 161 to 280 (KEPA…MPLF). N-linked (GlcNAc...) asparagine glycans are attached at residues N56 and N98. Residues N342, N374, N716, and N729 are each glycosylated (N-linked (GlcNAc...) asparagine). The helical transmembrane segment at 832–852 (IATVVIIISVCMLVFVVAMGV) threads the bilayer. At 853–955 (YRVRIAHQHF…LEWDDSTLPY (103 aa)) the chain is on the cytoplasmic side. Residues 887–955 (PMEKHEGPGH…LEWDDSTLPY (69 aa)) form a disordered region. Residues 888–898 (MEKHEGPGHGE) show a composition bias toward basic and acidic residues. Acidic residues-rich tracts occupy residues 899 to 913 (DETE…EEEM) and 920 to 929 (DDSEEEEEEE).

It belongs to the calsyntenin family. Post-translationally, proteolytically processed under normal cellular conditions. A primary zeta-cleavage generates a large extracellular (soluble) N-terminal domain (sAlc) and a short C-terminal transmembrane fragment (CTF1). A secondary cleavage catalyzed by gamma-secretase within the transmembrane domain releases the beta-Alc-gamma chain in the extracellular milieu and produces an intracellular fragment (AlcICD). This processing is strongly suppressed in the tripartite complex formed with APBA2 and APP, which seems to prevent the association with PSEN1. Restricted to the brain.

The protein localises to the postsynaptic cell membrane. It is found in the endoplasmic reticulum membrane. It localises to the golgi apparatus membrane. The protein resides in the cell projection. Its subcellular location is the dendrite. Its function is as follows. Postsynaptic adhesion molecule that binds to presynaptic neurexins to mediate synapse formation, and which is involved in learning and memory. Promotes synapse development by acting as a cell adhesion molecule at the postsynaptic membrane, which associates with neurexin-alpha at the presynaptic membrane. The chain is Calsyntenin-2 from Homo sapiens (Human).